Reading from the N-terminus, the 438-residue chain is Tyrosine--tRNA ligase (438 aa).

An L-tyrosine-binding site is contributed by Tyr-47. Residues 52 to 61 carry the 'HIGH' region motif; sequence PTATSLHVGG. Tyr-183 and Gln-187 together coordinate L-tyrosine. The short motif at 243–247 is the 'KMSKS' region element; it reads KMGKT. ATP is bound at residue Lys-246. In terms of domain architecture, S4 RNA-binding spans 370–436; that stretch reads LWIVEALQTA…GKRKYALLKI (67 aa).

It belongs to the class-I aminoacyl-tRNA synthetase family. TyrS type 1 subfamily. As to quaternary structure, homodimer.

It is found in the cytoplasm. It carries out the reaction tRNA(Tyr) + L-tyrosine + ATP = L-tyrosyl-tRNA(Tyr) + AMP + diphosphate + H(+). In terms of biological role, catalyzes the attachment of tyrosine to tRNA(Tyr) in a two-step reaction: tyrosine is first activated by ATP to form Tyr-AMP and then transferred to the acceptor end of tRNA(Tyr). This Rhodopirellula baltica (strain DSM 10527 / NCIMB 13988 / SH1) protein is Tyrosine--tRNA ligase.